The sequence spans 368 residues: Quinolinate synthase (368 aa).

The iminosuccinate site is built by His46 and Ser63. Cys110 contacts [4Fe-4S] cluster. Residues 141–143 (YVN) and Ser162 each bind iminosuccinate. Cys230 is a binding site for [4Fe-4S] cluster. Iminosuccinate contacts are provided by residues 256–258 (HPE) and Thr273. Cys320 serves as a coordination point for [4Fe-4S] cluster.

The protein belongs to the quinolinate synthase family. Type 3 subfamily. The cofactor is [4Fe-4S] cluster.

It is found in the cytoplasm. It catalyses the reaction iminosuccinate + dihydroxyacetone phosphate = quinolinate + phosphate + 2 H2O + H(+). The protein operates within cofactor biosynthesis; NAD(+) biosynthesis; quinolinate from iminoaspartate: step 1/1. Catalyzes the condensation of iminoaspartate with dihydroxyacetone phosphate to form quinolinate. The protein is Quinolinate synthase of Bacillus thuringiensis (strain Al Hakam).